The primary structure comprises 433 residues: Probable M18 family aminopeptidase 2 (433 aa).

Positions 84, 161, and 409 each coordinate Zn(2+).

It belongs to the peptidase M18 family. It depends on Zn(2+) as a cofactor.

This chain is Probable M18 family aminopeptidase 2, found in Clostridium novyi (strain NT).